The sequence spans 77 residues: Probable [Fe-S]-dependent transcriptional repressor (77 aa).

Iron-sulfur cluster-binding residues include cysteine 54, cysteine 59, cysteine 62, and cysteine 68.

Belongs to the FeoC family.

May function as a transcriptional regulator that controls feoABC expression. In Proteus mirabilis (strain HI4320), this protein is Probable [Fe-S]-dependent transcriptional repressor.